The following is a 177-amino-acid chain: Nucleoside triphosphate/diphosphate phosphatase (177 aa).

Arg-23 functions as the Proton donor in the catalytic mechanism. Mg(2+)-binding residues include Asn-87, Asp-103, Asp-105, Asp-107, Asp-120, and Glu-123.

Belongs to the Ntdp family. Requires Mg(2+) as cofactor.

It catalyses the reaction a ribonucleoside 5'-triphosphate + H2O = a ribonucleoside 5'-diphosphate + phosphate + H(+). The catalysed reaction is a ribonucleoside 5'-diphosphate + H2O = a ribonucleoside 5'-phosphate + phosphate + H(+). Has nucleoside phosphatase activity towards nucleoside triphosphates and nucleoside diphosphates. The polypeptide is Nucleoside triphosphate/diphosphate phosphatase (Streptococcus pyogenes serotype M3 (strain ATCC BAA-595 / MGAS315)).